We begin with the raw amino-acid sequence, 301 residues long: Uricase (301 aa).

Catalysis depends on charge relay system residues Lys-11 and Thr-58. Urate contacts are provided by Thr-58, Asp-59, Phe-160, Arg-177, Val-228, Gln-229, and Asn-255. The active-site Charge relay system is His-257. Positions 299-301 (AKL) match the Microbody targeting signal motif.

The protein belongs to the uricase family.

Its subcellular location is the peroxisome. The catalysed reaction is urate + O2 + H2O = 5-hydroxyisourate + H2O2. The protein operates within purine metabolism; urate degradation; (S)-allantoin from urate: step 1/3. Catalyzes the oxidation of uric acid to 5-hydroxyisourate, which is further processed to form (S)-allantoin. This is Uricase (uaZ) from Emericella nidulans (strain FGSC A4 / ATCC 38163 / CBS 112.46 / NRRL 194 / M139) (Aspergillus nidulans).